A 308-amino-acid polypeptide reads, in one-letter code: tRNA dimethylallyltransferase (308 aa).

Residue 17–24 (GPTGSGKS) participates in ATP binding. Position 19 to 24 (19 to 24 (TGSGKS)) interacts with substrate.

The protein belongs to the IPP transferase family. In terms of assembly, monomer. Requires Mg(2+) as cofactor.

The catalysed reaction is adenosine(37) in tRNA + dimethylallyl diphosphate = N(6)-dimethylallyladenosine(37) in tRNA + diphosphate. Functionally, catalyzes the transfer of a dimethylallyl group onto the adenine at position 37 in tRNAs that read codons beginning with uridine, leading to the formation of N6-(dimethylallyl)adenosine (i(6)A). The protein is tRNA dimethylallyltransferase of Paenarthrobacter aurescens (strain TC1).